The sequence spans 303 residues: Ornithine carbamoyltransferase (303 aa).

Residues 52–55 (STRT), Q79, R103, and 130–133 (HPCQ) each bind carbamoyl phosphate. Residues N161, D222, and 226–227 (SM) contribute to the L-ornithine site. Carbamoyl phosphate-binding positions include 262 to 263 (CL) and K290.

It belongs to the aspartate/ornithine carbamoyltransferase superfamily. OTCase family.

Its subcellular location is the cytoplasm. It catalyses the reaction carbamoyl phosphate + L-ornithine = L-citrulline + phosphate + H(+). The protein operates within amino-acid biosynthesis; L-arginine biosynthesis; L-arginine from L-ornithine and carbamoyl phosphate: step 1/3. Functionally, reversibly catalyzes the transfer of the carbamoyl group from carbamoyl phosphate (CP) to the N(epsilon) atom of ornithine (ORN) to produce L-citrulline. In Desulfotalea psychrophila (strain LSv54 / DSM 12343), this protein is Ornithine carbamoyltransferase.